Consider the following 264-residue polypeptide: 3-methyl-2-oxobutanoate hydroxymethyltransferase (264 aa).

Residues D46 and D85 each contribute to the Mg(2+) site. Residues 46 to 47, D85, and K113 contribute to the 3-methyl-2-oxobutanoate site; that span reads DS. Residue E115 participates in Mg(2+) binding. The active-site Proton acceptor is the E181.

Belongs to the PanB family. Homodecamer; pentamer of dimers. Requires Mg(2+) as cofactor.

The protein resides in the cytoplasm. It carries out the reaction 3-methyl-2-oxobutanoate + (6R)-5,10-methylene-5,6,7,8-tetrahydrofolate + H2O = 2-dehydropantoate + (6S)-5,6,7,8-tetrahydrofolate. The protein operates within cofactor biosynthesis; (R)-pantothenate biosynthesis; (R)-pantoate from 3-methyl-2-oxobutanoate: step 1/2. Functionally, catalyzes the reversible reaction in which hydroxymethyl group from 5,10-methylenetetrahydrofolate is transferred onto alpha-ketoisovalerate to form ketopantoate. The protein is 3-methyl-2-oxobutanoate hydroxymethyltransferase of Salmonella typhi.